The sequence spans 1375 residues: Protein lingerer (1375 aa).

The segment at M1 to Q69 is disordered. Over residues S53–Q62 the composition is skewed to basic and acidic residues. The UBA domain occupies Q84–E124. Low complexity-rich tracts occupy residues A142 to N161 and S173 to S184. The segment at A142–E286 is disordered. Residues R185 to E204 are compositionally biased toward basic and acidic residues. A compositionally biased stretch (gly residues) spans R228–G282. Residue Y321 is modified to Phosphotyrosine. S324 carries the post-translational modification Phosphoserine. 2 stretches are compositionally biased toward polar residues: residues V374 to G387 and A395 to V412. Disordered regions lie at residues V374–D453 and F613–Q646. The span at S426 to G441 shows a compositional bias: gly residues. 2 stretches are compositionally biased toward low complexity: residues S442–D453 and Q629–Q646. S672 carries the phosphoserine modification. Phosphothreonine is present on T673. A Phosphoserine modification is found at S674. Over residues Q750 to G767 the composition is skewed to low complexity. 5 disordered regions span residues Q750–A801, S869–G894, K987–G1036, S1203–S1234, and E1251–Q1277. Residues A768 to T781 are compositionally biased toward gly residues. 3 stretches are compositionally biased toward low complexity: residues G789–A801, S869–S882, and K987–A1008. Over residues S1009–G1036 the composition is skewed to gly residues. Residues M1265–Q1277 are compositionally biased toward polar residues.

In terms of tissue distribution, at stage 11, expression is restricted to the neuroblasts, predominant in the central nervous system (CNS), including the brain and ventral nerve cord, and in the PNS. Later embryonic expression is seen in the gonads. Late third instar larvae show expression in the CNS, imaginal disks (including genital, eye-antennal, leg, wing and haltere disks), and gonads. In the larval brain, it is expressed in all of the glial cells and in clusters of neurons that projected contralaterally. In the larval ventral ganglion, it is expressed in subperineurial glia, peripheral exit glia, and a number of interneurons, but not in motor neurons. Isoform B is abundantly expressed in males and females. Isoform D is male specific and expressed at low levels.

It is found in the cytoplasm. In terms of biological role, acts in the nervous system to mediate the control of copulatory organs during courtship. This chain is Protein lingerer, found in Drosophila melanogaster (Fruit fly).